We begin with the raw amino-acid sequence, 95 residues long: Aspartyl/glutamyl-tRNA(Asn/Gln) amidotransferase subunit C (95 aa).

The segment at 51 to 95 (PTSHATLTSSRLREDVTRPSLPPEKSLANAPAKSDTSFAVPKIIE) is disordered.

The protein belongs to the GatC family. In terms of assembly, heterotrimer of A, B and C subunits.

The enzyme catalyses L-glutamyl-tRNA(Gln) + L-glutamine + ATP + H2O = L-glutaminyl-tRNA(Gln) + L-glutamate + ADP + phosphate + H(+). It carries out the reaction L-aspartyl-tRNA(Asn) + L-glutamine + ATP + H2O = L-asparaginyl-tRNA(Asn) + L-glutamate + ADP + phosphate + 2 H(+). Its function is as follows. Allows the formation of correctly charged Asn-tRNA(Asn) or Gln-tRNA(Gln) through the transamidation of misacylated Asp-tRNA(Asn) or Glu-tRNA(Gln) in organisms which lack either or both of asparaginyl-tRNA or glutaminyl-tRNA synthetases. The reaction takes place in the presence of glutamine and ATP through an activated phospho-Asp-tRNA(Asn) or phospho-Glu-tRNA(Gln). The polypeptide is Aspartyl/glutamyl-tRNA(Asn/Gln) amidotransferase subunit C (Myxococcus xanthus (strain DK1622)).